A 428-amino-acid chain; its full sequence is MFEAVIADIQAREILDSRGYPTLHVKVTTSTGSVGEARVPSGASTGKKEALEFRDTDSPRYQGKGVLQAVKNVKEILFPLVKGCSVYEQSLIDSLMMDSDGSPNKETLGANAILGVSLATAHAAAATLRRPLYRYLGGCFACSLPCPMMNLINGGMHADNGLGFQEFMIRPIGASSIKEAVNMGADVFHTLKKLLHERGLSTGVGDEGGFAPNLASNEEALELLLLAIEKAGFTPGKDISLALDCAASSFYNVKTGTYDGRHYEEQIAILSNLCDRYPIDSIEDGLAEEDYDGWALLTEVLGEKVQIVGDDLFVTNPELILEGISNGLANSVLIKPNQIGTLTETVYAIKLAQMAGYTTIISHRSGETTDTTIADLAVAFNAGQIKTGSLSRSERVAKYNRLMEIEEELGSEAIFTDSNVFSYEDSEE.

Gln-165 is a binding site for (2R)-2-phosphoglycerate. The active-site Proton donor is Glu-207. Residues Asp-244, Glu-283, and Asp-310 each contribute to the Mg(2+) site. Residues Lys-335, Arg-364, Ser-365, and Lys-386 each coordinate (2R)-2-phosphoglycerate. The active-site Proton acceptor is the Lys-335.

It belongs to the enolase family. Mg(2+) serves as cofactor.

The protein localises to the cytoplasm. Its subcellular location is the secreted. It is found in the cell surface. It catalyses the reaction (2R)-2-phosphoglycerate = phosphoenolpyruvate + H2O. The protein operates within carbohydrate degradation; glycolysis; pyruvate from D-glyceraldehyde 3-phosphate: step 4/5. Its function is as follows. Catalyzes the reversible conversion of 2-phosphoglycerate (2-PG) into phosphoenolpyruvate (PEP). It is essential for the degradation of carbohydrates via glycolysis. The sequence is that of Enolase from Chlamydia pneumoniae (Chlamydophila pneumoniae).